The chain runs to 105 residues: uncharacterized protein (105 aa).

Helical transmembrane passes span 3–23 (ISPL…QALF), 41–61 (DLVN…ALVS), and 63–83 (AFPV…TFIY).

The protein localises to the cell membrane. This is an uncharacterized protein from Methanocaldococcus jannaschii (strain ATCC 43067 / DSM 2661 / JAL-1 / JCM 10045 / NBRC 100440) (Methanococcus jannaschii).